The following is an 832-amino-acid chain: Protein P (832 aa).

A terminal protein domain (TP) region spans residues 1–177 (MPLSYQHFRR…FCGSPYSWEQ (177 aa)). Positions 178-335 (ELQHGAESFH…YCLSHIVNLL (158 aa)) are spacer. Positions 186-229 (FHQQSSGILSRPPVGSSLQSKHSKSRLGLQSQQGHLARRQQGRS) are disordered. The polymerase/reverse transcriptase domain (RT) stretch occupies residues 336–679 (EDWGPCAEHG…YLNLYPVARQ (344 aa)). The region spanning 346-589 (EHHIRTPRTP…YSLNFMGYVI (244 aa)) is the Reverse transcriptase domain. Residues Asp-418, Asp-540, and Asp-541 each coordinate Mg(2+).

The protein belongs to the hepadnaviridae P protein family.

The enzyme catalyses DNA(n) + a 2'-deoxyribonucleoside 5'-triphosphate = DNA(n+1) + diphosphate. The catalysed reaction is Endonucleolytic cleavage to 5'-phosphomonoester.. Its activity is regulated as follows. Activated by host HSP70 and HSP40 in vitro to be able to bind the epsilon loop of the pgRNA. Because deletion of the RNase H region renders the protein partly chaperone-independent, the chaperones may be needed indirectly to relieve occlusion of the RNA-binding site by this domain. Inhibited by several reverse-transcriptase inhibitors: Lamivudine, Adefovir and Entecavir. Functionally, multifunctional enzyme that converts the viral RNA genome into dsDNA in viral cytoplasmic capsids. This enzyme displays a DNA polymerase activity that can copy either DNA or RNA templates, and a ribonuclease H (RNase H) activity that cleaves the RNA strand of RNA-DNA heteroduplexes in a partially processive 3'- to 5'-endonucleasic mode. Neo-synthesized pregenomic RNA (pgRNA) are encapsidated together with the P protein, and reverse-transcribed inside the nucleocapsid. Initiation of reverse-transcription occurs first by binding the epsilon loop on the pgRNA genome, and is initiated by protein priming, thereby the 5'-end of (-)DNA is covalently linked to P protein. Partial (+)DNA is synthesized from the (-)DNA template and generates the relaxed circular DNA (RC-DNA) genome. After budding and infection, the RC-DNA migrates in the nucleus, and is converted into a plasmid-like covalently closed circular DNA (cccDNA). The activity of P protein does not seem to be necessary for cccDNA generation, and is presumably released from (+)DNA by host nuclear DNA repair machinery. The chain is Protein P from Hepatitis B virus genotype D (isolate Germany/1-91/1991) (HBV-D).